The sequence spans 740 residues: Elongation factor 2 (740 aa).

The tr-type G domain occupies 23–264; sequence AQIRNAGTLA…MIIEHVPPPN (242 aa). GTP contacts are provided by residues 32–39, 98–102, and 152–155; these read AHVDHGKT, DTPGH, and NKID. His605 is modified (diphthamide).

Belongs to the TRAFAC class translation factor GTPase superfamily. Classic translation factor GTPase family. EF-G/EF-2 subfamily.

The protein resides in the cytoplasm. Catalyzes the GTP-dependent ribosomal translocation step during translation elongation. During this step, the ribosome changes from the pre-translocational (PRE) to the post-translocational (POST) state as the newly formed A-site-bound peptidyl-tRNA and P-site-bound deacylated tRNA move to the P and E sites, respectively. Catalyzes the coordinated movement of the two tRNA molecules, the mRNA and conformational changes in the ribosome. The sequence is that of Elongation factor 2 from Pyrobaculum calidifontis (strain DSM 21063 / JCM 11548 / VA1).